The chain runs to 173 residues: RNA pyrophosphohydrolase (173 aa).

The Nudix hydrolase domain occupies 11–164 (PYRRSVGILV…KKHVYMKIVN (154 aa)). The Nudix box signature appears at 52–73 (GGIDENEEPLDAARRELYEETG).

This sequence belongs to the Nudix hydrolase family. RppH subfamily. A divalent metal cation is required as a cofactor.

Accelerates the degradation of transcripts by removing pyrophosphate from the 5'-end of triphosphorylated RNA, leading to a more labile monophosphorylated state that can stimulate subsequent ribonuclease cleavage. This is RNA pyrophosphohydrolase from Bartonella henselae (strain ATCC 49882 / DSM 28221 / CCUG 30454 / Houston 1) (Rochalimaea henselae).